A 462-amino-acid polypeptide reads, in one-letter code: Peroxisomal membrane protein PEX31 (462 aa).

Residues 1–19 (MSEINNENLEPTSSTVAES) show a composition bias toward polar residues. The disordered stretch occupies residues 1–26 (MSEINNENLEPTSSTVAESTESKNKH). The Cytoplasmic segment spans residues 1-90 (MSEINNENLE…LSIITWSNDN (90 aa)). The helical transmembrane segment at 91-111 (VSANLLGIFLFTVCVLYFGFI) threads the bilayer. Topologically, residues 112 to 175 (TRYFGHLMIV…TILSAQDVRR (64 aa)) are peroxisomal. A helical transmembrane segment spans residues 176–196 (LLFTIAFLSPVYIFLTVFVLS). The Cytoplasmic portion of the chain corresponds to 197–462 (PNYLMLIGGL…ISDVSMSPSL (266 aa)). The tract at residues 406 to 425 (PTVEKATPNSHALKSEENNR) is disordered. A Phosphoserine modification is found at S432. T435 bears the Phosphothreonine mark.

The protein belongs to the PEX28-32 family. PEX30/31 subfamily.

It is found in the peroxisome membrane. This is Peroxisomal membrane protein PEX31 (PEX31) from Saccharomyces cerevisiae (strain ATCC 204508 / S288c) (Baker's yeast).